The chain runs to 632 residues: Cytoplasmic polyadenylation element-binding protein 3 (632 aa).

The span at 1–11 shows a compositional bias: basic and acidic residues; sequence MQDDLLMDKSK. 2 disordered regions span residues 1 to 89 and 127 to 212; these read MQDD…TGGS and FSPQ…RRAV. Positions 13-48 are enriched in low complexity; the sequence is QQRQQPQQPPSSQTQQQQKEAASVAEPPSSRESSPP. 2 stretches are compositionally biased toward polar residues: residues 65 to 89 and 135 to 169; these read SFQQEPPTTPSLSPSFGSTWSTGGS and HQTQQQQRRSPASPNNHTAYTQRNAYSHQPILTNK. Low complexity predominate over residues 170–193; sequence PSSSPNSSSPSPSNWNNQQNAAWN. RRM domains lie at 375-466 and 483-565; these read RKVF…PWNL and KTIF…PYVL.

Belongs to the RRM CPEB family. In terms of assembly, following synaptic activity, forms amyloid-like oligomers. Aggregation requires an intact actin cytoskeleton. In embryos, expressed in the central nervous system, and intermediate and distal pronephric tubule segments of the embryonic kidney.

Its subcellular location is the cytoplasm. It localises to the nucleus. The protein resides in the synapse. It is found in the cell projection. The protein localises to the dendrite. Its subcellular location is the postsynaptic density. Its function is as follows. Sequence-specific RNA-binding protein which acts as a translational repressor in the basal unstimulated state but, following neuronal stimulation, acts as a translational activator. Does not bind to the cytoplasmic polyadenylation element (CPE), a uridine-rich sequence element within the mRNA 3'-UTR, but binds to a U-rich loop within a stem-loop structure. Required for the consolidation and maintenance of hippocampal-based long term memory. Inhibits differentiation of intermediate mesoderm from an early stage to inhibit pronephric differentiation but induce neural differentiation. This chain is Cytoplasmic polyadenylation element-binding protein 3 (cpeb3), found in Xenopus tropicalis (Western clawed frog).